Here is a 1111-residue protein sequence, read N- to C-terminus: Cellulose synthase-like protein D4 (1111 aa).

2 disordered regions span residues methionine 1–arginine 26 and aspartate 175–arginine 202. Polar residues predominate over residues glycine 192–arginine 202. The next 2 membrane-spanning stretches (helical) occupy residues alanine 266–leucine 286 and alanine 297–leucine 317. Residues aspartate 397 and aspartate 809 contribute to the active site. 6 helical membrane-spanning segments follow: residues leucine 891 to valine 911, leucine 914 to valine 934, leucine 963 to leucine 983, leucine 1007 to isoleucine 1027, leucine 1040 to glycine 1060, and threonine 1070 to isoleucine 1090.

It belongs to the glycosyltransferase 2 family. Plant cellulose synthase-like D subfamily.

The protein localises to the golgi apparatus membrane. In terms of biological role, thought to be a Golgi-localized beta-glycan synthase that polymerize the backbones of noncellulosic polysaccharides (hemicelluloses) of plant cell wall. In Arabidopsis thaliana (Mouse-ear cress), this protein is Cellulose synthase-like protein D4 (CSLD4).